The following is a 554-amino-acid chain: Rab GTPase-binding effector protein 2 (554 aa).

The span at 1 to 15 (MAAAPAALALDPQPQ) shows a compositional bias: low complexity. Disordered stretches follow at residues 1–29 (MAAA…ELSR), 167–250 (IQRR…ETAS), and 375–395 (EQLP…DEAL). Positions 15-173 (QEEQKDASES…IQEIQRRPRQ (159 aa)) form a coiled coil. A compositionally biased stretch (basic and acidic residues) spans 16 to 29 (EEQKDASESSELSR). 4 positions are modified to phosphoserine: Ser176, Ser180, Ser187, and Ser191. Residues 274 to 512 (DSQWEQLQVE…LETSEQVQRD (239 aa)) are a coiled coil. Over residues 377-386 (LPSSALQGSE) the composition is skewed to polar residues.

It belongs to the rabaptin family. As to quaternary structure, heterodimer with RABGEF1. The dimer binds RAB5A that has been activated by GTP-binding. Interacts with SDCCAG8; this interaction is important for ciliogenesis regulation. Interacts with RAB4A; this interaction may mediate VEGFR2 cell surface expression.

The protein resides in the cytoplasm. The protein localises to the early endosome. It localises to the cytoskeleton. It is found in the microtubule organizing center. Its subcellular location is the centrosome. The protein resides in the cilium basal body. In terms of biological role, plays a role in membrane trafficking and in homotypic early endosome fusion. Participates in arteriogenesis by regulating vascular endothelial growth factor receptor 2/VEGFR2 cell surface expression and endosomal trafficking. By interacting with SDCCAG8, localizes to centrosomes and plays a critical role in ciliogenesis. The chain is Rab GTPase-binding effector protein 2 (Rabep2) from Rattus norvegicus (Rat).